Reading from the N-terminus, the 768-residue chain is Phosphoribosylformylglycinamidine synthase subunit PurL (768 aa).

The active site involves His-46. ATP is bound by residues Tyr-49 and Lys-88. Glu-90 is a binding site for Mg(2+). Substrate is bound by residues 91 to 94 (SHNH) and Arg-113. His-92 serves as the catalytic Proton acceptor. Asp-114 serves as a coordination point for Mg(2+). Gln-237 is a binding site for substrate. A Mg(2+)-binding site is contributed by Asp-265. Position 309–311 (309–311 (ESQ)) interacts with substrate. 2 residues coordinate ATP: Asp-514 and Gly-551. Asn-552 contacts Mg(2+). Ser-554 serves as a coordination point for substrate.

Belongs to the FGAMS family. As to quaternary structure, monomer. Part of the FGAM synthase complex composed of 1 PurL, 1 PurQ and 2 PurS subunits.

The protein localises to the cytoplasm. The enzyme catalyses N(2)-formyl-N(1)-(5-phospho-beta-D-ribosyl)glycinamide + L-glutamine + ATP + H2O = 2-formamido-N(1)-(5-O-phospho-beta-D-ribosyl)acetamidine + L-glutamate + ADP + phosphate + H(+). It participates in purine metabolism; IMP biosynthesis via de novo pathway; 5-amino-1-(5-phospho-D-ribosyl)imidazole from N(2)-formyl-N(1)-(5-phospho-D-ribosyl)glycinamide: step 1/2. In terms of biological role, part of the phosphoribosylformylglycinamidine synthase complex involved in the purines biosynthetic pathway. Catalyzes the ATP-dependent conversion of formylglycinamide ribonucleotide (FGAR) and glutamine to yield formylglycinamidine ribonucleotide (FGAM) and glutamate. The FGAM synthase complex is composed of three subunits. PurQ produces an ammonia molecule by converting glutamine to glutamate. PurL transfers the ammonia molecule to FGAR to form FGAM in an ATP-dependent manner. PurS interacts with PurQ and PurL and is thought to assist in the transfer of the ammonia molecule from PurQ to PurL. In Synechocystis sp. (strain ATCC 27184 / PCC 6803 / Kazusa), this protein is Phosphoribosylformylglycinamidine synthase subunit PurL.